Consider the following 132-residue polypeptide: Small ribosomal subunit protein uS8 (132 aa).

The protein belongs to the universal ribosomal protein uS8 family. In terms of assembly, part of the 30S ribosomal subunit. Contacts proteins S5 and S12.

Its function is as follows. One of the primary rRNA binding proteins, it binds directly to 16S rRNA central domain where it helps coordinate assembly of the platform of the 30S subunit. In Xanthomonas campestris pv. campestris (strain 8004), this protein is Small ribosomal subunit protein uS8.